Consider the following 135-residue polypeptide: Large ribosomal subunit protein uL16c (135 aa).

It belongs to the universal ribosomal protein uL16 family. As to quaternary structure, part of the 50S ribosomal subunit.

The protein localises to the plastid. The protein resides in the chloroplast. This chain is Large ribosomal subunit protein uL16c, found in Populus alba (White poplar).